Reading from the N-terminus, the 504-residue chain is Glucose-6-phosphate isomerase (504 aa).

E333 serves as the catalytic Proton donor. Active-site residues include H364 and K473.

It belongs to the GPI family.

The protein resides in the cytoplasm. It carries out the reaction alpha-D-glucose 6-phosphate = beta-D-fructose 6-phosphate. Its pathway is carbohydrate biosynthesis; gluconeogenesis. The protein operates within carbohydrate degradation; glycolysis; D-glyceraldehyde 3-phosphate and glycerone phosphate from D-glucose: step 2/4. Its function is as follows. Catalyzes the reversible isomerization of glucose-6-phosphate to fructose-6-phosphate. This is Glucose-6-phosphate isomerase from Xanthomonas oryzae pv. oryzae (strain KACC10331 / KXO85).